Here is a 281-residue protein sequence, read N- to C-terminus: NAD-dependent protein deacetylase 1 (281 aa).

The 281-residue stretch at 1–281 (MEEGAALEGV…FDQILDALDL (281 aa)) folds into the Deacetylase sirtuin-type domain. NAD(+) is bound by residues 24–44 (GAGVSTDSGIPDYRSPRGSLN) and 102–105 (QNVD). The active-site Proton acceptor is His120. Positions 128, 131, 183, and 186 each coordinate Zn(2+). Residues 224-226 (GSS), 250-252 (NGG), and Val268 each bind NAD(+).

Belongs to the sirtuin family. Class II subfamily. It depends on Zn(2+) as a cofactor.

Its subcellular location is the cytoplasm. The enzyme catalyses N(6)-acetyl-L-lysyl-[protein] + NAD(+) + H2O = 2''-O-acetyl-ADP-D-ribose + nicotinamide + L-lysyl-[protein]. Its function is as follows. NAD-dependent protein deacetylase which modulates the activities of several enzymes which are inactive in their acetylated form. The chain is NAD-dependent protein deacetylase 1 from Corynebacterium efficiens (strain DSM 44549 / YS-314 / AJ 12310 / JCM 11189 / NBRC 100395).